The chain runs to 299 residues: Phosphatidylinositol-3-phosphatase (299 aa).

An N-terminal signal peptide occupies residues 1 to 43; that stretch reads MLRGIQALSRPLTRVYRALAVIGVLAASLLASWVGAVPQVGLA.

In terms of assembly, monomer. SapM interacts with host RAB7 via its C-terminus. It depends on a metal cation as a cofactor.

Its subcellular location is the secreted. The protein resides in the host cytoplasmic vesicle. It localises to the host phagosome. It catalyses the reaction a phosphate monoester + H2O = an alcohol + phosphate. It carries out the reaction a 1,2-diacyl-sn-glycero-3-phospho-(1D-myo-inositol-3-phosphate) + H2O = a 1,2-diacyl-sn-glycero-3-phospho-(1D-myo-inositol) + phosphate. Its activity is regulated as follows. Phosphatase activity is inhibited in vitro by low concentrations of several heavy metals (zinc chloride, sodium molybdate, magnesium chloride, and copper sulfate) and moderately high concentrations (&gt;8 mM) of EDTA. In terms of biological role, virulence factor that plays an important role in blocking phagosome-lysosome fusion and thus participates in the intracellular survival of the pathogen. Acts as a phosphatase that dephosphorylates phosphatidylinositol 3-phosphate (PI3P), a membrane trafficking regulatory lipid essential for phagosomal acquisition of lysosomal constituents. Therefore, SapM eliminates PI3P from the phagosomal membrane by catalyzing its hydrolysis, and thus contributes to inhibition of phagosome maturation. Also interferes with autophagy: SapM blocks autophagosome-lysosome fusion in macrophages by binding to the small GTPase RAB7, which prevents RAB7 from being involved in this process and thus negatively regulates autophagy flux. In vitro, displays phosphatase activity with broad specificity; can dephosphorylate a variety of phosphoester substrates, with the highest activity against phosphoenolpyruvate, glycerophosphate, GTP, NADPH, phosphotyrosine and trehalose-6-phosphate. In contrast, the enzyme exhibits poor activity against glucose-6-phosphate, phosphothreonine, and a number of nucleotides (NADP, ATP, AMP, and GMP). This Mycobacterium tuberculosis (strain ATCC 25618 / H37Rv) protein is Phosphatidylinositol-3-phosphatase.